The sequence spans 156 residues: Small ribosomal subunit protein uS7 (156 aa).

It belongs to the universal ribosomal protein uS7 family. In terms of assembly, part of the 30S ribosomal subunit. Contacts proteins S9 and S11.

Its function is as follows. One of the primary rRNA binding proteins, it binds directly to 16S rRNA where it nucleates assembly of the head domain of the 30S subunit. Is located at the subunit interface close to the decoding center, probably blocks exit of the E-site tRNA. This is Small ribosomal subunit protein uS7 from Bartonella tribocorum (strain CIP 105476 / IBS 506).